Reading from the N-terminus, the 298-residue chain is Probable D,D-dipeptide transport system permease protein DdpC (298 aa).

Topologically, residues 1–33 (MMLSEETSAVRPQKQTRFNGAKLVWMLKGSPLT) are cytoplasmic. The chain crosses the membrane as a helical span at residues 34 to 54 (VTSAVIIVLMLLMMIFSPWLA). The Periplasmic segment spans residues 55–96 (THDPNAIDLTARLLPPSAAHWFGTDEVGRDLFSRVLVGSQQS). Residues 97–117 (ILAGLVVVAIAGMIGSLLGCL) traverse the membrane as a helical segment. In terms of domain architecture, ABC transmembrane type-1 spans 97–282 (ILAGLVVVAI…LTAVGFNLFG (186 aa)). The Cytoplasmic segment spans residues 118–124 (SGVLGGR). Transmembrane regions (helical) follow at residues 125–145 (ADAI…LVLT) and 146–166 (MALA…IAIV). At 167 to 217 (RIPFYVRLARGQALVVRQYTYVQAAKTFGASRWHLINWHILRNSLPPLIVQ) the chain is on the cytoplasmic side. A helical membrane pass occupies residues 218 to 238 (ASLDIGSAILMAATLGFIGLG). Residues 239 to 260 (AQQPSAEWGAMVANGRNYVLDQ) lie on the Periplasmic side of the membrane. A helical membrane pass occupies residues 261–281 (WWYCAFPGAAILLTAVGFNLF). Residues 282-298 (GDGIRDLLDPKAGGKQS) are Cytoplasmic-facing.

This sequence belongs to the binding-protein-dependent transport system permease family. OppBC subfamily. The complex is composed of two ATP-binding proteins (DdpD and DdpF), two transmembrane proteins (DdpB and DdpC) and a solute-binding protein (DdpA).

Its subcellular location is the cell inner membrane. Part of the ABC transporter complex DdpABCDF, which is probably involved in D,D-dipeptide transport. Probably responsible for the translocation of the substrate across the membrane. The protein is Probable D,D-dipeptide transport system permease protein DdpC (ddpC) of Escherichia coli (strain K12).